A 331-amino-acid chain; its full sequence is Activator of 90 kDa heat shock protein ATPase homolog 2 (331 aa).

Belongs to the AHA1 family.

Its function is as follows. Co-chaperone that stimulates HSP90 ATPase activity. The polypeptide is Activator of 90 kDa heat shock protein ATPase homolog 2 (Ahsa2) (Mus musculus (Mouse)).